Here is a 245-residue protein sequence, read N- to C-terminus: Ubiquinone/menaquinone biosynthesis C-methyltransferase UbiE (245 aa).

S-adenosyl-L-methionine contacts are provided by residues threonine 71, aspartate 92, and 118–119; that span reads DA.

This sequence belongs to the class I-like SAM-binding methyltransferase superfamily. MenG/UbiE family.

The catalysed reaction is a 2-demethylmenaquinol + S-adenosyl-L-methionine = a menaquinol + S-adenosyl-L-homocysteine + H(+). The enzyme catalyses a 2-methoxy-6-(all-trans-polyprenyl)benzene-1,4-diol + S-adenosyl-L-methionine = a 5-methoxy-2-methyl-3-(all-trans-polyprenyl)benzene-1,4-diol + S-adenosyl-L-homocysteine + H(+). The protein operates within quinol/quinone metabolism; menaquinone biosynthesis; menaquinol from 1,4-dihydroxy-2-naphthoate: step 2/2. It participates in cofactor biosynthesis; ubiquinone biosynthesis. Functionally, methyltransferase required for the conversion of demethylmenaquinol (DMKH2) to menaquinol (MKH2) and the conversion of 2-polyprenyl-6-methoxy-1,4-benzoquinol (DDMQH2) to 2-polyprenyl-3-methyl-6-methoxy-1,4-benzoquinol (DMQH2). This Neisseria meningitidis serogroup B (strain ATCC BAA-335 / MC58) protein is Ubiquinone/menaquinone biosynthesis C-methyltransferase UbiE.